The sequence spans 160 residues: Complexin-4 (160 aa).

Positions 14–44 (KNLGFGGGSEEKKEEGGTSDPAAAKGMTREE) are disordered. Cys-157 is modified (cysteine methyl ester). The S-farnesyl cysteine moiety is linked to residue Cys-157. A propeptide spans 158-160 (SVM) (removed in mature form).

It belongs to the complexin/synaphin family. In terms of assembly, weakly binds to the SNARE core complex containing SNAP25, VAMP2 and STX1A. Farnesylation mediates presynaptic targeting and is important for function in neurotransmitter release. In terms of tissue distribution, present specifically in the retina (at protein level). Expressed in the outer nuclear layer of the retina (at protein level). Strongly expressed at rod photoreceptor ribbon synapses (at protein level). Not expressed at conventional amacrine cell synapses, nor at cone photoreceptor ribbon synapses (at protein level). Weakly expressed at cone photoreceptor synaptic terminals (at protein level). Not expressed in the brain (at protein level).

The protein localises to the synapse. The protein resides in the cell membrane. Its function is as follows. Complexin that regulates SNARE protein complex-mediated synaptic vesicle fusion. Required for the maintenance of synaptic ultrastructure in the adult retina. Positively regulates synaptic transmission through synaptic vesicle availability and exocytosis of neurotransmitters at photoreceptor ribbon synapses in the retina. Suppresses tonic photoreceptor activity and baseline 'noise' by suppression of Ca(2+) vesicle tonic release and the facilitation of evoked synchronous and asynchronous Ca(2+) vesicle release. This Mus musculus (Mouse) protein is Complexin-4 (Cplx4).